We begin with the raw amino-acid sequence, 187 residues long: Adenine phosphoribosyltransferase 1 (187 aa).

The residue at position 68 (Ser68) is a Phosphoserine. 133-137 (ATGGS) lines the AMP pocket.

The protein belongs to the purine/pyrimidine phosphoribosyltransferase family. Homodimer. Mg(2+) is required as a cofactor.

It localises to the cytoplasm. Its subcellular location is the nucleus. The catalysed reaction is AMP + diphosphate = 5-phospho-alpha-D-ribose 1-diphosphate + adenine. The protein operates within purine metabolism; AMP biosynthesis via salvage pathway; AMP from adenine: step 1/1. Its function is as follows. Catalyzes a salvage reaction resulting in the formation of AMP, that is energically less costly than de novo synthesis. This Saccharomyces cerevisiae (strain ATCC 204508 / S288c) (Baker's yeast) protein is Adenine phosphoribosyltransferase 1.